The chain runs to 485 residues: Benzaldehyde dehydrogenase YfmT (485 aa).

Residue 231–236 coordinates NAD(+); sequence GSTKVG. Active-site residues include Glu-253 and Cys-287.

It belongs to the aldehyde dehydrogenase family.

The catalysed reaction is benzaldehyde + NAD(+) + H2O = benzoate + NADH + 2 H(+). It carries out the reaction vanillin + NAD(+) + H2O = vanillate + NADH + 2 H(+). Functionally, a benzaldehyde dehydrogenase able to act on substrates with 3- and 4-hydroxy and methoxy substitutions; converts vanillin (4-hydroxy-3-methoxybenzaldehyde) to vanillic acid in vitro. The physiological substrate is unknown. This Bacillus subtilis (strain 168) protein is Benzaldehyde dehydrogenase YfmT (yfmT).